The chain runs to 523 residues: Lysine-specific demethylase 4D (523 aa).

One can recognise a JmjN domain in the interval 18–60 (IMIFHPTKEEFNDFDKYIAYMESQGAHRAGLAKIIPPKEWKAR). PolyADP-ribosyl glutamic acid is present on residues E26 and E27. Y136 serves as a coordination point for 2-oxoglutarate. One can recognise a JmjC domain in the interval 146–312 (DENTKQWNLG…YGKMASQCSC (167 aa)). Positions 192 and 194 each coordinate Fe cation. Positions 202 and 210 each coordinate 2-oxoglutarate. Residues C238 and H244 each contribute to the Zn(2+) site. A 2-oxoglutarate-binding site is contributed by K245. H280 is a binding site for Fe cation. Residues C310 and C312 each contribute to the Zn(2+) site. Positions 407-523 (RRSAVSGTAT…ASGCSWAPVP (117 aa)) are disordered. Positions 428-440 (KPSSTPSSTPGPS) are enriched in low complexity. The span at 448–458 (NGRRGRGRPPQ) shows a compositional bias: basic residues.

The protein belongs to the JHDM3 histone demethylase family. Requires Fe(2+) as cofactor. Post-translationally, ubiquitinated via 'Lys-63'-linked ubiquitin chains. Deubiquitinated by USP14 with the help of TRIM14 leading to stabilization.

It is found in the nucleus. The enzyme catalyses N(6),N(6),N(6)-trimethyl-L-lysyl(9)-[histone H3] + 2 2-oxoglutarate + 2 O2 = N(6)-methyl-L-lysyl(9)-[histone H3] + 2 formaldehyde + 2 succinate + 2 CO2. Its function is as follows. Histone demethylase that specifically demethylates 'Lys-9' of histone H3, thereby playing a central role in histone code. Does not demethylate histone H3 'Lys-4', H3 'Lys-27', H3 'Lys-36' nor H4 'Lys-20'. Demethylates both di- and trimethylated H3 'Lys-9' residue, while it has no activity on monomethylated residues. Demethylation of Lys residue generates formaldehyde and succinate. The sequence is that of Lysine-specific demethylase 4D (KDM4D) from Homo sapiens (Human).